We begin with the raw amino-acid sequence, 337 residues long: MVVKVGINGFGRIGRIVFRNAVEHPEVEIVAVNDPFIETHYAAYMLKYDSTHGRFKGDVKFSDNGLDVDGKHVRFYQERDPANIPWAETGADYVIESTGVFTTTEKASAHLKGGAKKVIISAPSADAPMFVMGVNNETYKSDIKVLSNASCTTNCLAPLAKVVNDNFGLVEGLMTTVHSYTATQKTVDGPSSKDWRGGRAAAQNIIPSSTGAAKAVGKVIPSLNGKLTGMSMRVPTSNVSVVDLTCRTDKSVTYDQIKEAMKKASANELKGIMSYSEDALVSSDLNGDTHSCIFDATAGIALNDHFIKLVAWYDNEWGYSRRVIDLIAYIAGVDAGK.

Residues 12–13 (RI), Asp-34, and Arg-79 contribute to the NAD(+) site. Residues 150–152 (SCT), Thr-181, 210–211 (TG), and Arg-233 contribute to the D-glyceraldehyde 3-phosphate site. The active-site Nucleophile is Cys-151. Residue Asn-315 participates in NAD(+) binding.

Belongs to the glyceraldehyde-3-phosphate dehydrogenase family. Homotetramer.

It localises to the cytoplasm. The enzyme catalyses D-glyceraldehyde 3-phosphate + phosphate + NAD(+) = (2R)-3-phospho-glyceroyl phosphate + NADH + H(+). It participates in carbohydrate degradation; glycolysis; pyruvate from D-glyceraldehyde 3-phosphate: step 1/5. This is Glyceraldehyde-3-phosphate dehydrogenase (GPD) from Coccidioides immitis (strain RS) (Valley fever fungus).